We begin with the raw amino-acid sequence, 130 residues long: Small ribosomal subunit protein eS8 (130 aa).

Belongs to the eukaryotic ribosomal protein eS8 family. In terms of assembly, part of the 30S ribosomal subunit.

The polypeptide is Small ribosomal subunit protein eS8 (Ignicoccus hospitalis (strain KIN4/I / DSM 18386 / JCM 14125)).